Here is a 584-residue protein sequence, read N- to C-terminus: Long-chain-fatty-acid--AMP ligase FadD23 (584 aa).

A run of 2 helical transmembrane segments spans residues 199 to 219 and 225 to 245; these read YFADTGAVPPLDLFIMSWLPF and LVLGVCAPIIVGCGAVLTSPV.

The protein belongs to the ATP-dependent AMP-binding enzyme family.

Its subcellular location is the membrane. It catalyses the reaction holo-[(hydroxy)phthioceranic acid synthase] + hexadecanoate + ATP = hexadecanoyl-[(hydroxy)phthioceranic acid synthase] + AMP + diphosphate. The enzyme catalyses holo-[(hydroxy)phthioceranic acid synthase] + octadecanoate + ATP = octadecanoyl-[(hydroxy)phthioceranic acid synthase] + AMP + diphosphate. It participates in lipid metabolism; fatty acid biosynthesis. Functionally, catalyzes the activation of long-chain fatty acids as acyl-adenylates (acyl-AMP), which are then transferred to the multifunctional polyketide synthase (PKS) type III for further chain extension. Involved in the biosynthesis of sulfolipid 1 (SL-1). The chain is Long-chain-fatty-acid--AMP ligase FadD23 (fadD23) from Mycobacterium bovis (strain ATCC BAA-935 / AF2122/97).